We begin with the raw amino-acid sequence, 418 residues long: MEFEFDVHKIFLEPITKLDNNLIPPRRPLISSSEAQKQIMTVIDEIGKASAKAQRLPASITSASRMQANKHHLYILKDCTPKTAGRGAVIGFLKVGYKKLFILDQKGSHIEAEPLCILDFYIHESLQRHGFGKELFSFMLRNEQVDVQHLAIDRPSEKFLSFLRKHFNLWSTIPQVNNFVVFEGFFRDRKASVKKTPAKRTEGEIKPYSLTDRDFLKQEEGLPWPLSQAQINLNRASSLGSSPTRACSRPPPGEEDFVKSLRNCRPHSLQRAASSEQEDHSQRRRTSEMNLSRGLLAQKNGYSRYLSPPPPLLTQGPYAAAQIKEQQSRTDSSAQEGRTQDRPNGSNSQHQNDLISSKQHVQDLHMELAAGRTMSDLKEGQNATKSPWCDHPSYTVLGTVLNAAWVKKKQELRSTRPW.

In terms of domain architecture, N-acetyltransferase spans 1–186 (MEFEFDVHKI…NNFVVFEGFF (186 aa)). Residues 120–133 (FYIH…GFGK) and 156–165 (SEKFLSFLRK) contribute to the acetyl-CoA site. 2 disordered regions span residues 237–292 (SSLG…MNLS) and 322–353 (QIKE…HQND). Positions 277–287 (QEDHSQRRRTS) are enriched in basic and acidic residues. Polar residues predominate over residues 329–353 (RTDSSAQEGRTQDRPNGSNSQHQND).

This sequence belongs to the acetyltransferase ATAT1 family.

Its subcellular location is the cytoplasm. The protein localises to the membrane. It is found in the clathrin-coated pit. It localises to the cell junction. The protein resides in the focal adhesion. Its subcellular location is the cell projection. The protein localises to the axon. It is found in the cytoskeleton. It localises to the spindle. It carries out the reaction L-lysyl-[alpha-tubulin] + acetyl-CoA = N(6)-acetyl-L-lysyl-[alpha-tubulin] + CoA + H(+). Specifically acetylates 'Lys-40' in alpha-tubulin on the lumenal side of microtubules. Promotes microtubule destabilization and accelerates microtubule dynamics; this activity may be independent of acetylation activity. Acetylates alpha-tubulin with a slow enzymatic rate, due to a catalytic site that is not optimized for acetyl transfer. Enters the microtubule through each end and diffuses quickly throughout the lumen of microtubules. Acetylates only long/old microtubules because of its slow acetylation rate since it does not have time to act on dynamically unstable microtubules before the enzyme is released. May be involved in neuron development. This chain is Alpha-tubulin N-acetyltransferase 1, found in Xenopus laevis (African clawed frog).